The chain runs to 363 residues: tRNA N6-adenosine threonylcarbamoyltransferase (363 aa).

Positions 121 and 125 each coordinate Fe cation. Substrate-binding positions include 143 to 147, aspartate 176, glycine 189, and asparagine 287; that span reads LASGG. Residue aspartate 315 participates in Fe cation binding.

Belongs to the KAE1 / TsaD family. Requires Fe(2+) as cofactor.

The protein resides in the cytoplasm. The enzyme catalyses L-threonylcarbamoyladenylate + adenosine(37) in tRNA = N(6)-L-threonylcarbamoyladenosine(37) in tRNA + AMP + H(+). Functionally, required for the formation of a threonylcarbamoyl group on adenosine at position 37 (t(6)A37) in tRNAs that read codons beginning with adenine. Is involved in the transfer of the threonylcarbamoyl moiety of threonylcarbamoyl-AMP (TC-AMP) to the N6 group of A37, together with TsaE and TsaB. TsaD likely plays a direct catalytic role in this reaction. This Rhodopseudomonas palustris (strain HaA2) protein is tRNA N6-adenosine threonylcarbamoyltransferase.